Here is a 212-residue protein sequence, read N- to C-terminus: ATP-dependent dethiobiotin synthetase BioD (212 aa).

13-18 contributes to the ATP binding site; that stretch reads GIGKTV. Threonine 17 contributes to the Mg(2+) binding site. The active site involves lysine 33. Mg(2+) is bound at residue glutamate 100. ATP contacts are provided by residues 100–103 and 184–186; these read EGAG and PHV.

The protein belongs to the dethiobiotin synthetase family. Homodimer. It depends on Mg(2+) as a cofactor.

The protein resides in the cytoplasm. The catalysed reaction is (7R,8S)-7,8-diammoniononanoate + CO2 + ATP = (4R,5S)-dethiobiotin + ADP + phosphate + 3 H(+). The protein operates within cofactor biosynthesis; biotin biosynthesis; biotin from 7,8-diaminononanoate: step 1/2. In terms of biological role, catalyzes a mechanistically unusual reaction, the ATP-dependent insertion of CO2 between the N7 and N8 nitrogen atoms of 7,8-diaminopelargonic acid (DAPA, also called 7,8-diammoniononanoate) to form a ureido ring. The sequence is that of ATP-dependent dethiobiotin synthetase BioD from Nitrobacter hamburgensis (strain DSM 10229 / NCIMB 13809 / X14).